The primary structure comprises 188 residues: Elongation factor P (188 aa).

The residue at position 34 (Lys-34) is an N6-(3,6-diaminohexanoyl)-5-hydroxylysine.

The protein belongs to the elongation factor P family. May be beta-lysylated on the epsilon-amino group of Lys-34 by the combined action of EpmA and EpmB, and then hydroxylated on the C5 position of the same residue by EpmC (if this protein is present). Lysylation is critical for the stimulatory effect of EF-P on peptide-bond formation. The lysylation moiety may extend toward the peptidyltransferase center and stabilize the terminal 3-CCA end of the tRNA. Hydroxylation of the C5 position on Lys-34 may allow additional potential stabilizing hydrogen-bond interactions with the P-tRNA.

Its subcellular location is the cytoplasm. It functions in the pathway protein biosynthesis; polypeptide chain elongation. Involved in peptide bond synthesis. Alleviates ribosome stalling that occurs when 3 or more consecutive Pro residues or the sequence PPG is present in a protein, possibly by augmenting the peptidyl transferase activity of the ribosome. Modification of Lys-34 is required for alleviation. The sequence is that of Elongation factor P from Yersinia pseudotuberculosis serotype O:1b (strain IP 31758).